Consider the following 894-residue polypeptide: LRR receptor-like serine/threonine-protein kinase IOS1 (894 aa).

The N-terminal stretch at 1–23 (MAFSSCFLLVLLQIFSALLLCLA) is a signal peptide. Topologically, residues 24–515 (QDQSGFISLD…KKKKNTVIAP (492 aa)) are extracellular. N-linked (GlcNAc...) asparagine glycans are attached at residues Asn48, Asn95, Asn137, Asn179, Asn223, Asn230, Asn260, Asn287, Asn309, Asn338, Asn399, Asn441, Asn462, and Asn469. LRR repeat units follow at residues 431–457 (LTSL…NMET) and 459–479 (KLIN…LLDK). The chain crosses the membrane as a helical span at residues 516–536 (VAASLVSVFLIGAGIVTFLIL). Topologically, residues 537–894 (KRKKRTKLGL…FTTELNPGAR (358 aa)) are cytoplasmic. Position 577 is a phosphothreonine (Thr577). One can recognise a Protein kinase domain in the interval 586–858 (NNFERVLGRG…QVVMDLKECL (273 aa)). ATP is bound by residues 592 to 600 (LGRGGFGVV) and Lys613. Tyr658 is subject to Phosphotyrosine. Asp710 acts as the Proton acceptor in catalysis. Ser744 is modified (phosphoserine). 2 positions are modified to phosphothreonine: Thr745 and Thr750. The residue at position 758 (Tyr758) is a Phosphotyrosine.

It belongs to the protein kinase superfamily. Ser/Thr protein kinase family. In terms of assembly, homodimerization. Interacts with BAK1 and FLS2; triggers FLS2-BAK1 complex formation upon microbe-associated molecular patterns (MAMPs) treatment. Also binds to CERK1 and EFR. In terms of tissue distribution, expressed in roots, cotyledons, leaves, flowers and siliques.

It is found in the cell membrane. Its function is as follows. Negatively regulates the abscisic acid (ABA) signaling pathway. Required for full susceptibility to filamentous (hemi)biotrophic oomycetes (e.g. H.arabidopsidis and P.parasitica) and fungal (e.g. E.cruciferarum) pathogens, probably by triggering the repression of ABA-sensitive COLD REGULATED and RESISTANCE TO DESICCATION genes during infection, but independently of immune responses. Involved in BAK1-dependent and BAK1-independent microbe-associated molecular patterns (MAMPs)-triggered immunity (PTI) leading to defense responses, including callose deposition and MAPK cascade activation, toward pathogenic bacteria (e.g. P.syringae). Required for chitin-mediated PTI. The protein is LRR receptor-like serine/threonine-protein kinase IOS1 of Arabidopsis thaliana (Mouse-ear cress).